A 310-amino-acid chain; its full sequence is Quinolinate synthase 2 (310 aa).

Positions 30 and 47 each coordinate iminosuccinate. Residue Cys-92 participates in [4Fe-4S] cluster binding. Iminosuccinate-binding positions include 118 to 120 (YVN) and Ser-135. Cys-177 is a [4Fe-4S] cluster binding site. Iminosuccinate-binding positions include 203 to 205 (HPE) and Thr-220. Cys-265 is a [4Fe-4S] cluster binding site.

Belongs to the quinolinate synthase family. Type 2 subfamily. It depends on [4Fe-4S] cluster as a cofactor.

It localises to the cytoplasm. The enzyme catalyses iminosuccinate + dihydroxyacetone phosphate = quinolinate + phosphate + 2 H2O + H(+). Its pathway is cofactor biosynthesis; NAD(+) biosynthesis; quinolinate from iminoaspartate: step 1/1. Functionally, catalyzes the condensation of iminoaspartate with dihydroxyacetone phosphate to form quinolinate. This chain is Quinolinate synthase 2, found in Methanosarcina acetivorans (strain ATCC 35395 / DSM 2834 / JCM 12185 / C2A).